We begin with the raw amino-acid sequence, 209 residues long: Molybdenum cofactor guanylyltransferase (209 aa).

GTP contacts are provided by residues 13-15 (LAG), Lys-26, Asn-54, Asp-72, and Asp-107. Asp-107 is a Mg(2+) binding site.

The protein belongs to the MobA family. As to quaternary structure, monomer. Requires Mg(2+) as cofactor.

It is found in the cytoplasm. The catalysed reaction is Mo-molybdopterin + GTP + H(+) = Mo-molybdopterin guanine dinucleotide + diphosphate. In terms of biological role, transfers a GMP moiety from GTP to Mo-molybdopterin (Mo-MPT) cofactor (Moco or molybdenum cofactor) to form Mo-molybdopterin guanine dinucleotide (Mo-MGD) cofactor. The sequence is that of Molybdenum cofactor guanylyltransferase from Nitrobacter hamburgensis (strain DSM 10229 / NCIMB 13809 / X14).